Consider the following 436-residue polypeptide: GTPase Der (436 aa).

EngA-type G domains lie at 4–167 (PIVA…NKES) and 176–351 (IRLS…ENHK). GTP is bound by residues 10-17 (GKPNVGKS), 57-61 (DTGGI), 119-122 (NKVD), 182-189 (GRPNVGKS), 229-233 (DTAGM), and 294-297 (NKWD). The KH-like domain occupies 352 to 436 (KRVQSSTLNE…PIHIIPRKRN (85 aa)).

The protein belongs to the TRAFAC class TrmE-Era-EngA-EngB-Septin-like GTPase superfamily. EngA (Der) GTPase family. In terms of assembly, associates with the 50S ribosomal subunit.

Its function is as follows. GTPase that plays an essential role in the late steps of ribosome biogenesis. The protein is GTPase Der of Staphylococcus epidermidis (strain ATCC 35984 / DSM 28319 / BCRC 17069 / CCUG 31568 / BM 3577 / RP62A).